We begin with the raw amino-acid sequence, 315 residues long: Secreted mono- and diacylglycerol lipase LIP2 (315 aa).

The first 21 residues, 1-21, serve as a signal peptide directing secretion; sequence MACFRVILYLSVIFFVQCVFA. Cysteines 68 and 308 form a disulfide. Asparagine 74 carries an N-linked (GlcNAc...) asparagine glycan. Serine 182 serves as the catalytic Nucleophile. Aspartate 240 is an active-site residue. Asparagine 265 is a glycosylation site (N-linked (GlcNAc...) asparagine). Histidine 292 is a catalytic residue.

This sequence belongs to the AB hydrolase superfamily. Lipase family. Class 3 subfamily.

The protein localises to the secreted. The enzyme catalyses a monoacylglycerol + H2O = glycerol + a fatty acid + H(+). It carries out the reaction a diacylglycerol + H2O = a monoacylglycerol + a fatty acid + H(+). Functionally, secreted lipase involved in Dandruff and seborrheic dermatitis (D/SD) probably via lipase-mediated breakdown of sebaceous lipids and release of irritating free fatty acids. Shows activity against monoglyceride and diglyceride substrates and generates free oleic acid from the substrates mono- and diolein. Able to cleave the oleic acid from both the 1 and the 2 position of the glycerol backbone as 1,2 isomers of diolein were converted into oleic acid and glycerol. Due to an absence of fatty acid synthase genes in Malassezia species, secretory lipases are essential for the yeast to generate free fatty acids from degradation of sebum and assimilate them as lipid sources for growth. Plays an essential role at the pathogen-host interface during disease progression. Also performs the reverse reaction to build diacylglycerols from monoacylglycerols. This chain is Secreted mono- and diacylglycerol lipase LIP2, found in Malassezia restricta (Seborrheic dermatitis infection agent).